The following is an 80-amino-acid chain: RNA-binding protein Hfq (80 aa).

The Sm domain occupies Asp-10–Val-70.

It belongs to the Hfq family. As to quaternary structure, homohexamer.

RNA chaperone that binds small regulatory RNA (sRNAs) and mRNAs to facilitate mRNA translational regulation in response to envelope stress, environmental stress and changes in metabolite concentrations. Also binds with high specificity to tRNAs. This chain is RNA-binding protein Hfq, found in Ruminiclostridium cellulolyticum (strain ATCC 35319 / DSM 5812 / JCM 6584 / H10) (Clostridium cellulolyticum).